Here is a 316-residue protein sequence, read N- to C-terminus: Bifunctional peptidase and (3S)-lysyl hydroxylase Jmjd7 (316 aa).

Residues 128–307 (VQKQCSNLPT…LKYSYFQLMD (180 aa)) form the JmjC domain. Fe cation contacts are provided by His178, Asp180, and His277.

In terms of assembly, homodimer; disulfide-linked. Interacts with DRG1 and DRG2. The cofactor is Fe(2+).

The protein resides in the nucleus. It localises to the cytoplasm. It catalyses the reaction L-lysyl-[protein] + 2-oxoglutarate + O2 = (3S)-3-hydroxy-L-lysyl-[protein] + succinate + CO2. Bifunctional enzyme that acts both as an endopeptidase and 2-oxoglutarate-dependent monooxygenase. Endopeptidase that cleaves histones N-terminal tails at the carboxyl side of methylated arginine or lysine residues, to generate 'tailless nucleosomes', which may trigger transcription elongation. Preferentially recognizes and cleaves monomethylated and dimethylated arginine residues of histones H2, H3 and H4. After initial cleavage, continues to digest histones tails via its aminopeptidase activity. Additionally, may play a role in protein biosynthesis by modifying the translation machinery. Acts as a Fe(2+) and 2-oxoglutarate-dependent monooxygenase, catalyzing (S)-stereospecific hydroxylation at C-3 of 'Lys-22' of DRG1 and 'Lys-21' of DRG2 translation factors (TRAFAC), promoting their interaction with ribonucleic acids (RNA). The polypeptide is Bifunctional peptidase and (3S)-lysyl hydroxylase Jmjd7 (Mus musculus (Mouse)).